The following is a 427-amino-acid chain: Adenylosuccinate synthetase (427 aa).

Residues glycine 12–lysine 18 and glycine 40–threonine 42 each bind GTP. Aspartate 13 acts as the Proton acceptor in catalysis. Mg(2+) is bound by residues aspartate 13 and glycine 40. Residues aspartate 13–lysine 16, asparagine 38–histidine 41, threonine 128, arginine 142, glutamine 223, threonine 238, and arginine 302 contribute to the IMP site. Histidine 41 (proton donor) is an active-site residue. Threonine 298–arginine 304 contributes to the substrate binding site. GTP contacts are provided by residues arginine 304, arginine 330–aspartate 332, and serine 412–glycine 414.

The protein belongs to the adenylosuccinate synthetase family. Homodimer. Requires Mg(2+) as cofactor.

It is found in the cytoplasm. The catalysed reaction is IMP + L-aspartate + GTP = N(6)-(1,2-dicarboxyethyl)-AMP + GDP + phosphate + 2 H(+). It functions in the pathway purine metabolism; AMP biosynthesis via de novo pathway; AMP from IMP: step 1/2. Functionally, plays an important role in the de novo pathway of purine nucleotide biosynthesis. Catalyzes the first committed step in the biosynthesis of AMP from IMP. This is Adenylosuccinate synthetase from Brachyspira hyodysenteriae (strain ATCC 49526 / WA1).